The chain runs to 286 residues: Homoserine kinase (286 aa).

78 to 88 (PLARGLGSSSS) contacts ATP.

This sequence belongs to the GHMP kinase family. Homoserine kinase subfamily.

The protein localises to the cytoplasm. The enzyme catalyses L-homoserine + ATP = O-phospho-L-homoserine + ADP + H(+). It functions in the pathway amino-acid biosynthesis; L-threonine biosynthesis; L-threonine from L-aspartate: step 4/5. Catalyzes the ATP-dependent phosphorylation of L-homoserine to L-homoserine phosphate. The protein is Homoserine kinase of Streptococcus thermophilus (strain CNRZ 1066).